We begin with the raw amino-acid sequence, 107 residues long: Translation initiation factor IF-1, chloroplastic (107 aa).

In terms of domain architecture, S1-like spans 8-83 (REKKNPREAK…SKGRIIYRLP (76 aa)).

It belongs to the IF-1 family. Component of the 30S ribosomal translation pre-initiation complex which assembles on the 30S ribosome in the order IF-2 and IF-3, IF-1 and N-formylmethionyl-tRNA(fMet); mRNA recruitment can occur at any time during PIC assembly.

Its subcellular location is the plastid. The protein resides in the chloroplast. One of the essential components for the initiation of protein synthesis. Stabilizes the binding of IF-2 and IF-3 on the 30S subunit to which N-formylmethionyl-tRNA(fMet) subsequently binds. Helps modulate mRNA selection, yielding the 30S pre-initiation complex (PIC). Upon addition of the 50S ribosomal subunit IF-1, IF-2 and IF-3 are released leaving the mature 70S translation initiation complex. This Lolium perenne (Perennial ryegrass) protein is Translation initiation factor IF-1, chloroplastic.